Reading from the N-terminus, the 344-residue chain is Putative transport protein sll0060 (344 aa).

The next 8 membrane-spanning stretches (helical) occupy residues 14–34 (LWIG…LQIL), 41–61 (LRIF…VRWL), 72–92 (AVAL…LLVI), 155–175 (LINL…IFIM), 215–235 (IGQA…LSIF), 237–257 (VPLA…PFGG), 262–282 (VLIS…VLAI), and 310–330 (ILLS…LVAI).

It belongs to the autoinducer-2 exporter (AI-2E) (TC 2.A.86) family.

The protein localises to the cell membrane. The sequence is that of Putative transport protein sll0060 from Synechocystis sp. (strain ATCC 27184 / PCC 6803 / Kazusa).